The chain runs to 96 residues: MTPEVAINFRERAYSLLQADAEKIVKLIQVQMDHLTMPQCPLYEEVLDTQMFGLSREIDFAVRLGLVDEKDGKAILDRLERELSALHEACTKKKKK.

It belongs to the UPF0358 family.

The chain is UPF0358 protein Aflv_1873 from Anoxybacillus flavithermus (strain DSM 21510 / WK1).